The following is a 671-amino-acid chain: DNA ligase (671 aa).

NAD(+)-binding positions include 31 to 35, 80 to 81, and Glu110; these read DAEYD and SL. The active-site N6-AMP-lysine intermediate is Lys112. Residues Arg133, Glu167, Lys283, and Lys307 each coordinate NAD(+). Residues Cys401, Cys404, Cys419, and Cys424 each coordinate Zn(2+). Residues 587–671 enclose the BRCT domain; the sequence is EEELVFAGKT…YLPDEGGLNE (85 aa).

It belongs to the NAD-dependent DNA ligase family. LigA subfamily. It depends on Mg(2+) as a cofactor. Requires Mn(2+) as cofactor.

It carries out the reaction NAD(+) + (deoxyribonucleotide)n-3'-hydroxyl + 5'-phospho-(deoxyribonucleotide)m = (deoxyribonucleotide)n+m + AMP + beta-nicotinamide D-nucleotide.. Its function is as follows. DNA ligase that catalyzes the formation of phosphodiester linkages between 5'-phosphoryl and 3'-hydroxyl groups in double-stranded DNA using NAD as a coenzyme and as the energy source for the reaction. It is essential for DNA replication and repair of damaged DNA. The polypeptide is DNA ligase (Listeria monocytogenes serotype 4a (strain HCC23)).